The following is a 1375-amino-acid chain: DNA-directed RNA polymerase subunit beta (1375 aa).

It belongs to the RNA polymerase beta chain family. In terms of assembly, the RNAP catalytic core consists of 2 alpha, 1 beta, 1 beta' and 1 omega subunit. When a sigma factor is associated with the core the holoenzyme is formed, which can initiate transcription.

It catalyses the reaction RNA(n) + a ribonucleoside 5'-triphosphate = RNA(n+1) + diphosphate. In terms of biological role, DNA-dependent RNA polymerase catalyzes the transcription of DNA into RNA using the four ribonucleoside triphosphates as substrates. This is DNA-directed RNA polymerase subunit beta from Methylorubrum populi (strain ATCC BAA-705 / NCIMB 13946 / BJ001) (Methylobacterium populi).